The following is a 218-amino-acid chain: Deoxyribose-phosphate aldolase (218 aa).

Residue D92 is the Proton donor/acceptor of the active site. The active-site Schiff-base intermediate with acetaldehyde is the K156. The Proton donor/acceptor role is filled by K185.

It belongs to the DeoC/FbaB aldolase family. DeoC type 1 subfamily.

It localises to the cytoplasm. It carries out the reaction 2-deoxy-D-ribose 5-phosphate = D-glyceraldehyde 3-phosphate + acetaldehyde. It functions in the pathway carbohydrate degradation; 2-deoxy-D-ribose 1-phosphate degradation; D-glyceraldehyde 3-phosphate and acetaldehyde from 2-deoxy-alpha-D-ribose 1-phosphate: step 2/2. In terms of biological role, catalyzes a reversible aldol reaction between acetaldehyde and D-glyceraldehyde 3-phosphate to generate 2-deoxy-D-ribose 5-phosphate. This Desulfitobacterium hafniense (strain DSM 10664 / DCB-2) protein is Deoxyribose-phosphate aldolase.